A 434-amino-acid polypeptide reads, in one-letter code: Serine hydroxymethyltransferase (434 aa).

(6S)-5,6,7,8-tetrahydrofolate-binding positions include Leu-131 and 135-137 (GHL). An N6-(pyridoxal phosphate)lysine modification is found at Lys-240.

The protein belongs to the SHMT family. As to quaternary structure, homodimer. It depends on pyridoxal 5'-phosphate as a cofactor.

Its subcellular location is the cytoplasm. It catalyses the reaction (6R)-5,10-methylene-5,6,7,8-tetrahydrofolate + glycine + H2O = (6S)-5,6,7,8-tetrahydrofolate + L-serine. The protein operates within one-carbon metabolism; tetrahydrofolate interconversion. It functions in the pathway amino-acid biosynthesis; glycine biosynthesis; glycine from L-serine: step 1/1. Functionally, catalyzes the reversible interconversion of serine and glycine with tetrahydrofolate (THF) serving as the one-carbon carrier. This reaction serves as the major source of one-carbon groups required for the biosynthesis of purines, thymidylate, methionine, and other important biomolecules. Also exhibits THF-independent aldolase activity toward beta-hydroxyamino acids, producing glycine and aldehydes, via a retro-aldol mechanism. In Gluconobacter oxydans (strain 621H) (Gluconobacter suboxydans), this protein is Serine hydroxymethyltransferase.